The sequence spans 389 residues: Na(+)/H(+) antiporter NhaA (389 aa).

11 helical membrane-spanning segments follow: residues 14–34 (AGGI…NSPL), 59–79 (LILW…GLEV), 95–115 (SLPT…YLLF), 124–144 (AGWA…MALL), 154–174 (VFLL…IALF), 177–197 (TDLS…LVGL), 213–233 (LILW…GVII), 257–277 (PWST…VYVG), 292–312 (IALG…YIAV), 328–348 (IAPV…IASL), and 363–383 (LGTL…LSKV).

Belongs to the NhaA Na(+)/H(+) (TC 2.A.33) antiporter family.

The protein resides in the cell inner membrane. It carries out the reaction Na(+)(in) + 2 H(+)(out) = Na(+)(out) + 2 H(+)(in). Functionally, na(+)/H(+) antiporter that extrudes sodium in exchange for external protons. In Shewanella baltica (strain OS155 / ATCC BAA-1091), this protein is Na(+)/H(+) antiporter NhaA.